The sequence spans 63 residues: Large ribosomal subunit protein uL29 (63 aa).

The protein belongs to the universal ribosomal protein uL29 family.

The protein is Large ribosomal subunit protein uL29 of Shewanella oneidensis (strain ATCC 700550 / JCM 31522 / CIP 106686 / LMG 19005 / NCIMB 14063 / MR-1).